Reading from the N-terminus, the 203-residue chain is Twist-related protein 1 (203 aa).

Residues 1-18 are compositionally biased toward low complexity; that stretch reads MMQDVSSSPVSPADDSLS. A disordered region spans residues 1–107; it reads MMQDVSSSPV…GGSPQSCEEL (107 aa). The span at 34–43 shows a compositional bias: basic residues; it reads RGGRKRRSSR. 2 stretches are compositionally biased toward gly residues: residues 46-65 and 80-100; these read AGGG…GGDE and GCGG…GGGS. A bHLH domain is found at 109–160; it reads TQRVMANVRERQRTQSLNEPFAALRKIIPTLPSDKLSKIQTLKLAARYIDFL. Positions 162–192 are sufficient for transactivation activity; it reads RVLQSDELDSKTASCSYVAHEWLSYAFSVWR.

In terms of assembly, efficient DNA binding requires dimerization with another bHLH protein. Homodimer or heterodimer with E proteins such as TCF3. ID1 binds preferentially to TCF3 but does not interact efficiently with TWIST1 so ID1 levels control the amount of TCF3 available to dimerize with TWIST and thus determine the type of dimer formed.

It is found in the nucleus. In terms of biological role, acts as a transcriptional regulator. Inhibits myogenesis by sequestrating E proteins, inhibiting trans-activation by MEF2, and inhibiting DNA-binding by MYOD1 through physical interaction. This interaction probably involves the basic domains of both proteins. Also represses expression of pro-inflammatory cytokines such as TNFA and IL1B. Regulates cranial suture patterning and fusion. Activates transcription as a heterodimer with E proteins. Regulates gene expression differentially, depending on dimer composition. Homodimers induce expression of FGFR2 and POSTN while heterodimers repress FGFR2 and POSTN expression and induce THBS1 expression. Heterodimerization is also required for osteoblast differentiation. Represses the activity of the circadian transcriptional activator: NPAS2-BMAL1 heterodimer. The protein is Twist-related protein 1 (TWIST1) of Gorilla gorilla gorilla (Western lowland gorilla).